The following is an 84-amino-acid chain: Small ribosomal subunit protein bS20 (84 aa).

The protein belongs to the bacterial ribosomal protein bS20 family.

In terms of biological role, binds directly to 16S ribosomal RNA. The sequence is that of Small ribosomal subunit protein bS20 from Limosilactobacillus fermentum (strain NBRC 3956 / LMG 18251) (Lactobacillus fermentum).